Reading from the N-terminus, the 382-residue chain is Na(+)/H(+) antiporter NhaA (382 aa).

Transmembrane regions (helical) follow at residues 13 to 33 (IGGILLFIAAVIAIIIANSPF), 58 to 78 (LLLWINDGLMAIYFLLIGLEI), 94 to 114 (LVPALTALAGLIFPALIFIFF), 124 to 144 (GWAIPTATDIAFTLGIVSLLG), 153 to 173 (ILLTAIAIFDDIAAIVIIALF), 179 to 199 (SLLSLSLALVFTLILIGLNYF), 204 to 224 (ISVFMLFGVALWIAVLKSGVH), 256 to 276 (VVFLILPLFAFANAGVSFVGL), 285 to 305 (VVLGIGLGLFLGKQLGIFLSL), 325 to 345 (VYGIALICGVGFTMSLFIGSL), and 357 to 377 (MVKIGVVLGSFIAGLTGFLVL).

Belongs to the NhaA Na(+)/H(+) (TC 2.A.33) antiporter family.

The protein resides in the cell inner membrane. The enzyme catalyses Na(+)(in) + 2 H(+)(out) = Na(+)(out) + 2 H(+)(in). Its function is as follows. Na(+)/H(+) antiporter that extrudes sodium in exchange for external protons. The sequence is that of Na(+)/H(+) antiporter NhaA from Legionella pneumophila (strain Paris).